A 242-amino-acid chain; its full sequence is Ubiquinone biosynthesis O-methyltransferase (242 aa).

S-adenosyl-L-methionine contacts are provided by arginine 44, glycine 64, aspartate 85, and methionine 129.

Belongs to the methyltransferase superfamily. UbiG/COQ3 family.

It carries out the reaction a 3-demethylubiquinol + S-adenosyl-L-methionine = a ubiquinol + S-adenosyl-L-homocysteine + H(+). The catalysed reaction is a 3-(all-trans-polyprenyl)benzene-1,2-diol + S-adenosyl-L-methionine = a 2-methoxy-6-(all-trans-polyprenyl)phenol + S-adenosyl-L-homocysteine + H(+). The protein operates within cofactor biosynthesis; ubiquinone biosynthesis. In terms of biological role, O-methyltransferase that catalyzes the 2 O-methylation steps in the ubiquinone biosynthetic pathway. The chain is Ubiquinone biosynthesis O-methyltransferase from Klebsiella pneumoniae subsp. pneumoniae (strain ATCC 700721 / MGH 78578).